Reading from the N-terminus, the 292-residue chain is ATP synthase gamma chain (292 aa).

The protein belongs to the ATPase gamma chain family. As to quaternary structure, F-type ATPases have 2 components, CF(1) - the catalytic core - and CF(0) - the membrane proton channel. CF(1) has five subunits: alpha(3), beta(3), gamma(1), delta(1), epsilon(1). CF(0) has three main subunits: a, b and c.

It is found in the cell inner membrane. Functionally, produces ATP from ADP in the presence of a proton gradient across the membrane. The gamma chain is believed to be important in regulating ATPase activity and the flow of protons through the CF(0) complex. In Hyphomonas neptunium (strain ATCC 15444), this protein is ATP synthase gamma chain.